The sequence spans 99 residues: Aspartyl/glutamyl-tRNA(Asn/Gln) amidotransferase subunit C (99 aa).

Belongs to the GatC family. In terms of assembly, heterotrimer of A, B and C subunits.

The enzyme catalyses L-glutamyl-tRNA(Gln) + L-glutamine + ATP + H2O = L-glutaminyl-tRNA(Gln) + L-glutamate + ADP + phosphate + H(+). It catalyses the reaction L-aspartyl-tRNA(Asn) + L-glutamine + ATP + H2O = L-asparaginyl-tRNA(Asn) + L-glutamate + ADP + phosphate + 2 H(+). Its function is as follows. Allows the formation of correctly charged Asn-tRNA(Asn) or Gln-tRNA(Gln) through the transamidation of misacylated Asp-tRNA(Asn) or Glu-tRNA(Gln) in organisms which lack either or both of asparaginyl-tRNA or glutaminyl-tRNA synthetases. The reaction takes place in the presence of glutamine and ATP through an activated phospho-Asp-tRNA(Asn) or phospho-Glu-tRNA(Gln). In Leptothrix cholodnii (strain ATCC 51168 / LMG 8142 / SP-6) (Leptothrix discophora (strain SP-6)), this protein is Aspartyl/glutamyl-tRNA(Asn/Gln) amidotransferase subunit C.